Consider the following 369-residue polypeptide: Mitogen-activated protein kinase 4 (369 aa).

Positions 32–319 constitute a Protein kinase domain; it reads YVPIKPIGRG…VTEALEHPYM (288 aa). Residues 38–46 and lysine 61 contribute to the ATP site; that span reads IGRGAYGIV. Catalysis depends on aspartate 158, which acts as the Proton acceptor. Threonine 191 bears the Phosphothreonine mark. Residues 191 to 193 carry the TXY motif; sequence TEY. Tyrosine 193 carries the post-translational modification Phosphotyrosine.

The protein belongs to the protein kinase superfamily. CMGC Ser/Thr protein kinase family. MAP kinase subfamily. In terms of processing, dually phosphorylated on Thr-191 and Tyr-193, which activates the enzyme. Expressed in leaves and panicles.

The catalysed reaction is L-seryl-[protein] + ATP = O-phospho-L-seryl-[protein] + ADP + H(+). It catalyses the reaction L-threonyl-[protein] + ATP = O-phospho-L-threonyl-[protein] + ADP + H(+). Activated by threonine and tyrosine phosphorylation. This chain is Mitogen-activated protein kinase 4 (MPK4), found in Oryza sativa subsp. japonica (Rice).